The primary structure comprises 119 residues: Putative membrane protein insertion efficiency factor (119 aa).

This sequence belongs to the UPF0161 family.

The protein localises to the cell inner membrane. In terms of biological role, could be involved in insertion of integral membrane proteins into the membrane. In Agrobacterium fabrum (strain C58 / ATCC 33970) (Agrobacterium tumefaciens (strain C58)), this protein is Putative membrane protein insertion efficiency factor.